The chain runs to 231 residues: MTKIGIIGAMDEEVELLKSKLSNCSERTIAECEFYTGTIEGKEIVLLKSGIGKVNAAIGTTLLIQLFQPTAIINTGSAGGLDSSLHVGDLAISTEVRYNDVDATVFGYEFGQVPQMPAFYQPDDMLIDIAIEAAKTVGIPSKKGLILSGDSFMSDAALVEQLKRRFNYPLCSEMEAGAIAQVCHRFGVPFVIIRSLSDIAGAEAKVSYDEFLETASVNSANLVLAIVGRLG.

E13 (proton acceptor) is an active-site residue. Substrate-binding positions include G79, M153, and 174 to 175 (ME). Residue D198 is the Proton donor of the active site.

The protein belongs to the PNP/UDP phosphorylase family. MtnN subfamily.

It catalyses the reaction S-adenosyl-L-homocysteine + H2O = S-(5-deoxy-D-ribos-5-yl)-L-homocysteine + adenine. It carries out the reaction S-methyl-5'-thioadenosine + H2O = 5-(methylsulfanyl)-D-ribose + adenine. The catalysed reaction is 5'-deoxyadenosine + H2O = 5-deoxy-D-ribose + adenine. Its pathway is amino-acid biosynthesis; L-methionine biosynthesis via salvage pathway; S-methyl-5-thio-alpha-D-ribose 1-phosphate from S-methyl-5'-thioadenosine (hydrolase route): step 1/2. Functionally, catalyzes the irreversible cleavage of the glycosidic bond in both 5'-methylthioadenosine (MTA) and S-adenosylhomocysteine (SAH/AdoHcy) to adenine and the corresponding thioribose, 5'-methylthioribose and S-ribosylhomocysteine, respectively. Also cleaves 5'-deoxyadenosine, a toxic by-product of radical S-adenosylmethionine (SAM) enzymes, into 5-deoxyribose and adenine. The sequence is that of 5'-methylthioadenosine/S-adenosylhomocysteine nucleosidase from Halalkalibacterium halodurans (strain ATCC BAA-125 / DSM 18197 / FERM 7344 / JCM 9153 / C-125) (Bacillus halodurans).